A 391-amino-acid chain; its full sequence is Ferrochelatase (391 aa).

Fe cation contacts are provided by His-196 and Glu-281.

Belongs to the ferrochelatase family.

It localises to the cytoplasm. The enzyme catalyses heme b + 2 H(+) = protoporphyrin IX + Fe(2+). Its pathway is porphyrin-containing compound metabolism; protoheme biosynthesis; protoheme from protoporphyrin-IX: step 1/1. Functionally, catalyzes the ferrous insertion into protoporphyrin IX. The sequence is that of Ferrochelatase from Prochlorococcus marinus (strain SARG / CCMP1375 / SS120).